We begin with the raw amino-acid sequence, 374 residues long: Pectinesterase (374 aa).

The first 31 residues, 1–31 (MVKLLNSTRELSINALSMLNSFGDMVAQATG), serve as a signal peptide directing secretion. N-linked (GlcNAc...) asparagine glycans are attached at residues asparagine 58 and asparagine 124. The substrate site is built by threonine 133 and glutamine 163. Aspartate 186 functions as the Proton donor in the catalytic mechanism. A disulfide bridge connects residues cysteine 200 and cysteine 220. Aspartate 207 functions as the Nucleophile in the catalytic mechanism. Residue asparagine 230 is glycosylated (N-linked (GlcNAc...) asparagine). Residues arginine 275 and tryptophan 277 each contribute to the substrate site. Asparagine 303 carries N-linked (GlcNAc...) asparagine glycosylation.

The protein belongs to the pectinesterase family. As to expression, pollen, and at much lower levels in pistils and petals.

It localises to the secreted. Its subcellular location is the cell wall. The enzyme catalyses [(1-&gt;4)-alpha-D-galacturonosyl methyl ester](n) + n H2O = [(1-&gt;4)-alpha-D-galacturonosyl](n) + n methanol + n H(+). Its pathway is glycan metabolism; pectin degradation; 2-dehydro-3-deoxy-D-gluconate from pectin: step 1/5. In terms of biological role, may play a role in pollen germination and/or tube growth. The polypeptide is Pectinesterase (PPE1) (Petunia integrifolia (Violet-flowered petunia)).